The following is a 119-amino-acid chain: UPF0342 protein GTNG_0551 (119 aa).

It belongs to the UPF0342 family.

In Geobacillus thermodenitrificans (strain NG80-2), this protein is UPF0342 protein GTNG_0551.